Here is a 335-residue protein sequence, read N- to C-terminus: Dihydroorotate dehydrogenase (quinone) (335 aa).

FMN-binding positions include 58 to 62 (AGADK) and Thr82. A substrate-binding site is contributed by Lys62. Residue 107–111 (NRNGF) participates in substrate binding. FMN-binding residues include Asn135 and Asn168. Asn168 is a substrate binding site. The Nucleophile role is filled by Ser171. A substrate-binding site is contributed by Asn173. 2 residues coordinate FMN: Lys213 and Gly241. 242–243 (NT) provides a ligand contact to substrate. FMN is bound by residues Gly264, Gly293, and 314 to 315 (YS).

The protein belongs to the dihydroorotate dehydrogenase family. Type 2 subfamily. As to quaternary structure, monomer. Requires FMN as cofactor.

Its subcellular location is the cell membrane. The catalysed reaction is (S)-dihydroorotate + a quinone = orotate + a quinol. It functions in the pathway pyrimidine metabolism; UMP biosynthesis via de novo pathway; orotate from (S)-dihydroorotate (quinone route): step 1/1. Functionally, catalyzes the conversion of dihydroorotate to orotate with quinone as electron acceptor. In Haemophilus ducreyi (strain 35000HP / ATCC 700724), this protein is Dihydroorotate dehydrogenase (quinone).